Consider the following 214-residue polypeptide: Guanylate kinase (214 aa).

In terms of domain architecture, Guanylate kinase-like spans 6-192 (GTLYIISAPS…ALEDLKSIFR (187 aa)). 13 to 20 (APSGAGKT) contributes to the ATP binding site.

The protein belongs to the guanylate kinase family.

Its subcellular location is the cytoplasm. The catalysed reaction is GMP + ATP = GDP + ADP. Its function is as follows. Essential for recycling GMP and indirectly, cGMP. This Pseudomonas syringae pv. tomato (strain ATCC BAA-871 / DC3000) protein is Guanylate kinase.